Reading from the N-terminus, the 366-residue chain is 3-dehydroquinate synthase (366 aa).

Residues 107 to 111 (GVIGD), 131 to 132 (TT), Lys-144, and Lys-153 each bind NAD(+). Zn(2+) contacts are provided by Glu-186, His-251, and His-268.

This sequence belongs to the sugar phosphate cyclases superfamily. Dehydroquinate synthase family. Co(2+) serves as cofactor. The cofactor is Zn(2+). NAD(+) is required as a cofactor.

It is found in the cytoplasm. The enzyme catalyses 7-phospho-2-dehydro-3-deoxy-D-arabino-heptonate = 3-dehydroquinate + phosphate. It participates in metabolic intermediate biosynthesis; chorismate biosynthesis; chorismate from D-erythrose 4-phosphate and phosphoenolpyruvate: step 2/7. In terms of biological role, catalyzes the conversion of 3-deoxy-D-arabino-heptulosonate 7-phosphate (DAHP) to dehydroquinate (DHQ). This is 3-dehydroquinate synthase from Microcystis aeruginosa (strain NIES-843 / IAM M-2473).